Consider the following 147-residue polypeptide: Large ribosomal subunit protein bL9 (147 aa).

This sequence belongs to the bacterial ribosomal protein bL9 family.

Its function is as follows. Binds to the 23S rRNA. In Campylobacter jejuni subsp. doylei (strain ATCC BAA-1458 / RM4099 / 269.97), this protein is Large ribosomal subunit protein bL9.